The following is a 96-amino-acid chain: Co-chaperonin GroES (96 aa).

Belongs to the GroES chaperonin family. In terms of assembly, heptamer of 7 subunits arranged in a ring. Interacts with the chaperonin GroEL.

Its subcellular location is the cytoplasm. In terms of biological role, together with the chaperonin GroEL, plays an essential role in assisting protein folding. The GroEL-GroES system forms a nano-cage that allows encapsulation of the non-native substrate proteins and provides a physical environment optimized to promote and accelerate protein folding. GroES binds to the apical surface of the GroEL ring, thereby capping the opening of the GroEL channel. The sequence is that of Co-chaperonin GroES from Tremblaya princeps.